A 906-amino-acid polypeptide reads, in one-letter code: MCRIAGAPRTLLPLLAALLQASVEASGEIALCKTGFPEDVYSAVLSKDVHEGQPLLNVKFSNCNGKRKVQYESSEPADFKVDEDGMVYAVRSFPLSSEHAKFLIYAQDKETQEKWQVAVKLSLKPTLPEESVKESTEVEEIVFPRQLGKHSGHLQRQKRDWVIPPINLPENSRGPFPQELVRIRSDRDKNLSLRYSVTGPGADQPPTGIFIINPISGQLSVTKPLDREQIARFHLRAHAVDINGNQVENPIDIVINVIDMNDNRPEFLHQVWNGTVPEGSKPGTYVMTVTAIDADDPNALNGMLRYRILSQAPSTPSPNMFTINNETGDIITVAAGLDREKVQQYTLIIQATDMEGNPTYGLSNTATAIITVTDVNDNPPEFTAMTFYGEVPENRVDVIVANLTVTDKDQPHTPAWNAVYRISGGDPTGRFAIQTDPNSNDGLVTVVKPIDFETNRMFVLTVAAENQVPLAKGIQHPPQSTATVSVTVIDVNENPYFAPNPKIIRQEEGLHAGTMLTTFTAQDPDRYMQQNIRYTKLSDPANWLKIDPVNGQITTIAILDRESPNVKNNIYNATFLASDNGIPPMSGTGTLQIYLLDINDNAPQVLPQEAETCETPDPNSINITALDYDIDPNAGPFAFDLPLSPVNIKRNWTITRLNGDFAQLNLKIKFLEAGIYEVPIIITDSGNPPKSNISILRVKVCQCDSNGDCTDVDRIVGAGLGTGAIIAILLCIIILLILVLMFVVWMKRRDKERQAKQLLIDPEDDVRDNILKYDEEGGGEEDQDYDLSQLQQPDTVEPDAIKPVGIRRMDERPIHAEPQYPVRSAAPHPGDIGDFINEGLKAADNDPTAPPYDSLLVFDYEGSGSTAGSLSSLNSSSSGGEQDYDYLNDWGPRFKKLADMYGGGDD.

An N-terminal signal peptide occupies residues 1–25 (MCRIAGAPRTLLPLLAALLQASVEA). A propeptide spanning residues 26-159 (SGEIALCKTG…HSGHLQRQKR (134 aa)) is cleaved from the precursor. Phosphoserine occurs at positions 96 and 135. Cadherin domains are found at residues 160-267 (DWVI…RPEF), 268-382 (LHQV…PPEF), 383-497 (TAMT…NPYF), 498-603 (APNP…DNAP), and 604-714 (QVLP…DVDR). Topologically, residues 160–724 (DWVIPPINLP…IVGAGLGTGA (565 aa)) are extracellular. E170 contributes to the Ca(2+) binding site. A glycan (N-linked (GlcNAc...) asparagine) is linked at N190. Ca(2+) contacts are provided by D226, E228, D259, M260, N261, D262, and N263. N-linked (GlcNAc...) asparagine glycosylation is present at N273. Ca(2+) contacts are provided by D293, D295, and N301. An N-linked (GlcNAc...) asparagine glycan is attached at N325. D353 serves as a coordination point for Ca(2+). Residues N402, N572, N622, N651, and N692 are each glycosylated (N-linked (GlcNAc...) asparagine). A helical transmembrane segment spans residues 725-745 (IIAILLCIIILLILVLMFVVW). The Cytoplasmic portion of the chain corresponds to 746–906 (MKRRDKERQA…LADMYGGGDD (161 aa)). The span at 863–880 (SGSTAGSLSSLNSSSSGG) shows a compositional bias: low complexity. Positions 863 to 884 (SGSTAGSLSSLNSSSSGGEQDY) are disordered.

Homodimer (via extracellular region). Can also form heterodimers with other cadherins (via extracellular region). Dimerization occurs in trans, i.e. with a cadherin chain from another cell. Interacts with CDCP1. Interacts with PCDH8; this complex may also include TAOK2. The interaction with PCDH8 may lead to internalization through TAOK2/p38 MAPK pathway. Identified in a complex containing FGFR4, NCAM1, CDH2, PLCG1, FRS2, SRC, SHC1, GAP43 and CTTN. May interact with OBSCN (via protein kinase domain 2). Interacts with FBXO45. In terms of processing, cleaved by MMP24. Ectodomain cleavage leads to the generation of a soluble 90 kDa N-terminal soluble fragment and a 45 kDa membrane-bound C-terminal fragment 1 (CTF1), which is further cleaved by gamma-secretase into a 35 kDa. Cleavage in neural stem cells by MMP24 affects CDH2-mediated anchorage of neural stem cells to ependymocytes in the adult subependymal zone, leading to modulate neural stem cell quiescence.

The protein resides in the cell membrane. The protein localises to the sarcolemma. It is found in the cell junction. Its subcellular location is the cell surface. It localises to the desmosome. The protein resides in the adherens junction. Calcium-dependent cell adhesion protein; preferentially mediates homotypic cell-cell adhesion by dimerization with a CDH2 chain from another cell. Cadherins may thus contribute to the sorting of heterogeneous cell types. Acts as a regulator of neural stem cells quiescence by mediating anchorage of neural stem cells to ependymocytes in the adult subependymal zone: upon cleavage by MMP24, CDH2-mediated anchorage is affected, leading to modulate neural stem cell quiescence. Plays a role in cell-to-cell junction formation between pancreatic beta cells and neural crest stem (NCS) cells, promoting the formation of processes by NCS cells. Required for proper neurite branching. Required for pre- and postsynaptic organization. CDH2 may be involved in neuronal recognition mechanism. In hippocampal neurons, may regulate dendritic spine density. This chain is Cadherin-2 (CDH2), found in Callithrix jacchus (White-tufted-ear marmoset).